We begin with the raw amino-acid sequence, 355 residues long: 3-dehydroquinate synthase (355 aa).

NAD(+)-binding positions include 71-76 (EGEASK), 105-109 (GVVGD), 129-130 (TS), K142, K151, and 169-172 (TLNT). Zn(2+)-binding residues include E184, H246, and H263.

This sequence belongs to the sugar phosphate cyclases superfamily. Dehydroquinate synthase family. NAD(+) is required as a cofactor. The cofactor is Co(2+). Requires Zn(2+) as cofactor.

The protein localises to the cytoplasm. It catalyses the reaction 7-phospho-2-dehydro-3-deoxy-D-arabino-heptonate = 3-dehydroquinate + phosphate. Its pathway is metabolic intermediate biosynthesis; chorismate biosynthesis; chorismate from D-erythrose 4-phosphate and phosphoenolpyruvate: step 2/7. Its function is as follows. Catalyzes the conversion of 3-deoxy-D-arabino-heptulosonate 7-phosphate (DAHP) to dehydroquinate (DHQ). The chain is 3-dehydroquinate synthase from Streptococcus mutans serotype c (strain ATCC 700610 / UA159).